The chain runs to 269 residues: Regulatory protein RecX (269 aa).

Belongs to the RecX family.

It localises to the cytoplasm. Its function is as follows. Modulates RecA activity. This chain is Regulatory protein RecX, found in Listeria monocytogenes serotype 4b (strain CLIP80459).